We begin with the raw amino-acid sequence, 2611 residues long: Highly reducing polyketide synthase ATEG_07659 (2611 aa).

Residues 10-409 (SEPIAIIGLS…GTNSHVIVEG (400 aa)) form the Ketosynthase family 3 (KS3) domain. Catalysis depends on for beta-ketoacyl synthase activity residues Cys157, His292, and His330. The malonyl-CoA:ACP transacylase (MAT) domain stretch occupies residues 537–844 (MVFTGQGAQW…VRFVEAFTDM (308 aa)). The tract at residues 969–1109 (HDLLGVLVPG…GLITVQMAAD (141 aa)) is N-terminal hotdog fold. The 324-residue stretch at 969 to 1292 (HDLLGVLVPG…CQSLGRSAPG (324 aa)) folds into the PKS/mFAS DH domain. A dehydratase (DH) domain region spans residues 970 to 1289 (DLLGVLVPGT…GLVCQSLGRS (320 aa)). His1001 functions as the Proton acceptor; for dehydratase activity in the catalytic mechanism. The interval 1128–1292 (GYTRRIDPQD…CQSLGRSAPG (165 aa)) is C-terminal hotdog fold. The active-site Proton donor; for dehydratase activity is Asp1199. The methyltransferase (CMet) domain stretch occupies residues 1469-1602 (FGQLKSLLAA…GATLLLMETT (134 aa)). Residues 1898–2213 (GLLDTLAFGD…TGKHLGKLVL (316 aa)) form an enoyl reductase (ER) domain region. Residues 2236–2416 (ASYLLVGGVG…AVSLDMGVIK (181 aa)) form a ketoreductase (KR) domain region. Low complexity predominate over residues 2499–2509 (SRAQAQQAGGD). A disordered region spans residues 2499–2520 (SRAQAQQAGGDSDSEPLSAKLR). Residues 2527–2604 (AAARCVGDAI…ALALDVVAKS (78 aa)) enclose the Carrier domain. Position 2564 is an O-(pantetheine 4'-phosphoryl)serine (Ser2564).

The protein operates within secondary metabolite biosynthesis. Functionally, highly reducing polyketide synthase; part of the cluster B that mediates the biosynthesis of azasperpyranones, members of the azaphilone family that exhibit anti-cancer activities. Azasperpyranones are synthesized by 2 clusters, A and B. Cluster A is responsible for the production of the polyhydric phenol moiety while the azaphilonoid scaffold is produced by the cluster B. The non-reducing polyketide synthase ATEG_03629 produces 5-methyl orsellinic acid, which is then reduced to 5-methyl orsellinic aldehyde by the NRPS-like protein ATEG_03630. 5-methyl orsellinic aldehyde is then first hydroxylated by the FAD-dependent monooxygenase ATEG_03635 and subsequently hydroxylated by the cytochrome P450 monooxygenase ATEG_03631 to produce the unstable polyhydric phenol precursor of azasperpyranones. On the other hand, the polyketide synthase ATEG_07659 is responsible for producing the 3,5-dimethyloctadienone moiety from acetyl-CoA, three malonyl-CoA, and two S-adenosyl methionines (SAM). The 3,5-dimethyloctadienone moiety is then loaded onto the SAT domain of ATEG_07661 and extended with four malonyl-CoA and one SAM, which leads to the formation of 2,4-dihydroxy-6-(5,7-dimethyl-2-oxo-trans-3-trans-5-nonadienyl)-3-methylbenzaldehyde (compound 8) after reductive release and aldol condensation. The FAD-dependent monooxygenase ATEG_07662 is the next enzyme in the biosynthesis sequence and hydroxylates the side chain at the benzylic position of compound 8. In Aspergillus nidulans, afoF, the ortholog of the FAD-dependent oxygenase ATEG_07660, is the key enzyme for the biosynthesis of asperfuranone by catalyzing the hydroxylation at C-8 of to prevent the formation of a six-membered ring hemiacetal intermediate and thus facilitating the formation of a five-membered ring to produce asperfuranone. In Aspergillus terreus, ATEG_07660 is probably not functional, which leads to the formation of the six-membered ring hemiacetal intermediate presperpyranone instead of asperfuranone. Finally, ATEG_03636 is involved in the condensation of the polyhydric phenol moiety produced by cluster A and the perasperpyranone precursor produced by cluster B, to yield azasperpyranone A. Further modifications of azasperpyranone A result in the production of derivatives, including azasperpyranone B to F. In Aspergillus terreus (strain NIH 2624 / FGSC A1156), this protein is Highly reducing polyketide synthase ATEG_07659.